A 356-amino-acid chain; its full sequence is sn-glycerol-3-phosphate import ATP-binding protein UgpC (356 aa).

The ABC transporter domain maps to 4-235 (LKLQAVTKSW…PASLFVASFI (232 aa)). Position 37 to 44 (37 to 44 (GPSGCGKS)) interacts with ATP.

The protein belongs to the ABC transporter superfamily. sn-glycerol-3-phosphate importer (TC 3.A.1.1.3) family. As to quaternary structure, the complex is composed of two ATP-binding proteins (UgpC), two transmembrane proteins (UgpA and UgpE) and a solute-binding protein (UgpB).

The protein localises to the cell inner membrane. It catalyses the reaction sn-glycerol 3-phosphate(out) + ATP + H2O = sn-glycerol 3-phosphate(in) + ADP + phosphate + H(+). In terms of biological role, part of the ABC transporter complex UgpBAEC involved in sn-glycerol-3-phosphate (G3P) import. Responsible for energy coupling to the transport system. This Escherichia coli O157:H7 protein is sn-glycerol-3-phosphate import ATP-binding protein UgpC.